Reading from the N-terminus, the 437-residue chain is Acyl-coenzyme A thioesterase 9, mitochondrial (437 aa).

A mitochondrion-targeting transit peptide spans 1–21; sequence MRRAALRLCTLSKGLLAPSRG. HotDog ACOT-type domains follow at residues 84–207 and 287–399; these read SYIE…RDSE and ENSK…EKEV. Lys101 carries the N6-acetyllysine modification.

Belongs to the acyl coenzyme A hydrolase family. Interacts with NYAP1, NYAP2 and MYO16.

It is found in the mitochondrion. The protein resides in the mitochondrion matrix. The protein localises to the mitochondrion inner membrane. It catalyses the reaction butanoyl-CoA + H2O = butanoate + CoA + H(+). The catalysed reaction is propanoyl-CoA + H2O = propanoate + CoA + H(+). The enzyme catalyses hexadecanoyl-CoA + H2O = hexadecanoate + CoA + H(+). It carries out the reaction octanoyl-CoA + H2O = octanoate + CoA + H(+). It catalyses the reaction decanoyl-CoA + H2O = decanoate + CoA + H(+). The catalysed reaction is tetradecanoyl-CoA + H2O = tetradecanoate + CoA + H(+). The enzyme catalyses 4,8-dimethylnonanoyl-CoA + H2O = 4,8-dimethylnonanoate + CoA + H(+). It carries out the reaction 3-methylbutanoyl-CoA + H2O = 3-methylbutanoate + CoA + H(+). It catalyses the reaction 2-methylpropanoyl-CoA + H2O = 2-methylpropanoate + CoA + H(+). Its pathway is lipid metabolism; fatty acid metabolism. With respect to regulation, strongly inhibited by NADH and CoA. Mitochondrial acyl-CoA thioesterase. Catalyzes the hydrolysis of acyl-CoAs into free fatty acids and coenzyme A (CoA), regulating their respective intracellular levels. Regulates both mitochondrial lipid and amino acid metabolism. The sequence is that of Acyl-coenzyme A thioesterase 9, mitochondrial (ACOT9) from Bos taurus (Bovine).